Here is a 475-residue protein sequence, read N- to C-terminus: Protein ABCI7, chloroplastic (475 aa).

Residues 1-36 constitute a chloroplast transit peptide; the sequence is MAAATVLGRLSLIPNLSSKPKLKSNRRTTSTSVSVR.

Interacts with NAP7.

It localises to the plastid. Its subcellular location is the chloroplast. The polypeptide is Protein ABCI7, chloroplastic (ABCI7) (Arabidopsis thaliana (Mouse-ear cress)).